Reading from the N-terminus, the 276-residue chain is Diaminopimelate epimerase (276 aa).

Substrate contacts are provided by Asn-13, Gln-46, and Asn-66. The active-site Proton donor is the Cys-75. Substrate-binding positions include 76–77 (GN), Asn-159, Asn-192, and 210–211 (ER). The active-site Proton acceptor is Cys-219. 220–221 (GT) serves as a coordination point for substrate.

The protein belongs to the diaminopimelate epimerase family. Homodimer.

It is found in the cytoplasm. The catalysed reaction is (2S,6S)-2,6-diaminopimelate = meso-2,6-diaminopimelate. It functions in the pathway amino-acid biosynthesis; L-lysine biosynthesis via DAP pathway; DL-2,6-diaminopimelate from LL-2,6-diaminopimelate: step 1/1. Its function is as follows. Catalyzes the stereoinversion of LL-2,6-diaminopimelate (L,L-DAP) to meso-diaminopimelate (meso-DAP), a precursor of L-lysine and an essential component of the bacterial peptidoglycan. The sequence is that of Diaminopimelate epimerase from Pseudomonas putida (strain GB-1).